Reading from the N-terminus, the 381-residue chain is MALATPLPATQAAVKVTGPSTVDVSAATTLPVLEAFEVLVRVACVSINHVDGKSADMSPTPGATSGVDFSGLIVALGSKVDSDEFRANNNMRALSIGDRVFGGVFGNNPLRHDNGAFAEYVAVPARLIWHMPAAMDFSTAATIGATLATVGLALFQYLQVPMPSTQTISDSKTIPDPQQKTRMALVYGGGTATGAMAIQVLKLAGFRPITTCSPGSAARAMHLGAAATFDYRSPTCGADLREHTANGLELALDCITDTASMSICYEALGSAGGRYVALDAFPLRGHTRRSVAAEWVCTYTQFGHAVAWVPPYNLDARPRDREIAEAWYVVAQQLVDEGLIEPYPKEDRTGGLAAVGEGMRAVWKGEISGRKLAYPIAEECY.

NADP(+) is bound at residue 50–53; it reads VDGK. 145–152 is a binding site for substrate; the sequence is ATLATVGL. Residues 213-216, Tyr-231, and 278-279 contribute to the NADP(+) site; these read SPGS and LD. 298–302 lines the substrate pocket; that stretch reads TYTQF. 367-368 serves as a coordination point for NADP(+); sequence IS.

The protein belongs to the zinc-containing alcohol dehydrogenase family. Monomer.

The catalysed reaction is N-[(4E,6E,10S,12Z,14E)-6,10-dimethyl-3-oxohexadeca-4,6,12,14-tetraenoyl]-L-tyrosyl-[ACP] = (3E,5S)-3-[(2E,4E,8S,10E,12Z)-1-hydroxy-4,8-dimethyltetradeca-2,4,10,12-tetraen-1-ylidene]-5-[(4-hydroxyphenyl)methyl]pyrrolidine-2,4-dione + holo-[ACP] + H(+). The protein operates within mycotoxin biosynthesis. Functionally, trans-enoyl reductase; part of the gene cluster that mediates the biosynthesis of ilicicolin H, a 4-hydroxy-2-pyridonealkaloid that has potent and broad antifungal activities by inhibiting the mitochondrial respiration chain. IliB collaborates with the hybrid PKS-NRPS synthetase iliA to assemble the backbone of ilicicolin H. The PKS portion of iliA and trans-acting enoyl reductase iliB work together to construct an octaketide, and two methyl groups are introduced by the MT domain of iliA during the chain assembly. The nascent chain is then condensed with tyrosine, catalyzed by the iliA C domain, and the resulting PKS-NRPS hybrid is offloaded by the iliA RED domain to form an advanced tetramic acid intermediate. The biosynthesis of ilicicolin H starts with formation of the tetramic acid by the hybrid PKS-NRPS synthetase iliA with the partnering trans-enoyl reductase iliB since iliA lacks a designated enoylreductase (ER) domain. The cytochrome P450 monooxygenase iliC then catalyzes the ring expansion of the tetramate to the acyclic 2-pyridone. The pericyclase iliD further converts the acyclic 2-pyridone into 8-epi-ilicicolin H. 8-epi-ilicicolin H might then spontaneously convert to ilicicolin H since ilicicolin H is produced in the absence of the epimerase iliE, in contrast to what was observed for the Talaromyces variabilis ilicolin H biosynthetic pathway. The polypeptide is Trans-enoyl reductase iliB (Neonectria sp. (strain DH2)).